We begin with the raw amino-acid sequence, 78 residues long: Neurotoxin 3FTx-LK (78 aa).

The N-terminal stretch at 1 to 21 (MKTLLLTLVVVTIVCLDLGYT) is a signal peptide. 4 disulfide bridges follow: C24-C42, C35-C60, C64-C70, and C71-C76.

Expressed by the venom gland.

The protein localises to the secreted. Its function is as follows. Blocks both the muscle-twitch response to nerve stimulation and the response to exogenous acetylcholine. The sequence is that of Neurotoxin 3FTx-LK from Bungarus fasciatus (Banded krait).